The following is a 317-amino-acid chain: Melanocyte-stimulating hormone receptor (317 aa).

At 1 to 37 (MPALGSQRRLLGSLNCTPPATLPFTLAPNRTGPQCLE) the chain is on the extracellular side. N29 carries an N-linked (GlcNAc...) asparagine glycan. A helical membrane pass occupies residues 38–63 (VSIPDGLFLSLGLVSLVENVLVVAAI). The Cytoplasmic segment spans residues 64-72 (AKNRNLHSP). The chain crosses the membrane as a helical span at residues 73 to 93 (MYYFICCLAVSDLLVSVSNVL). Residues 94-118 (ETAVMLLLEAGVLATQAAVVQQLDN) lie on the Extracellular side of the membrane. Residues 119–140 (VIDVLICGSMVSSLCFLGAIAV) form a helical membrane-spanning segment. Residues 141 to 163 (DRYISIFYALRYHSVVTLPRAWR) are Cytoplasmic-facing. A helical transmembrane segment spans residues 164 to 183 (IIAAIWVASILTSLLFITYY). The Extracellular portion of the chain corresponds to 184–191 (NHKVILLC). A helical transmembrane segment spans residues 192–211 (LVGLFIAMLALMAVLYVHML). The Cytoplasmic portion of the chain corresponds to 212-240 (ARACQHARGIARLQKRQRPIHQGFGLKGA). Residues 241–266 (ATLTILLGVFFLCWGPFFLHLSLIVL) form a helical membrane-spanning segment. The Extracellular portion of the chain corresponds to 267 to 279 (CPQHPTCGCIFKN). A helical transmembrane segment spans residues 280–300 (FNLFLALIICNAIVDPLIYAF). The Cytoplasmic portion of the chain corresponds to 301–317 (RSQELRKTLQEVLQCSW). Residue C315 is the site of S-palmitoyl cysteine attachment.

Belongs to the G-protein coupled receptor 1 family. In terms of assembly, interacts with MGRN1, but does not undergo MGRN1-mediated ubiquitination; this interaction competes with GNAS-binding and thus inhibits agonist-induced cAMP production. Interacts with OPN3; the interaction results in a decrease in MC1R-mediated cAMP signaling and ultimately a decrease in melanin production in melanocytes. As to expression, highly expressed in the testis.

The protein resides in the cell membrane. Functionally, receptor for MSH (alpha, beta) and ACTH. Does not seem to be active with gamma-MSH. The activity of this receptor is mediated by G proteins which activate adenylate cyclase. Mediates melanogenesis, the production of eumelanin (black/brown) and phaeomelanin (red/yellow), via regulation of cAMP signaling in melanocytes. The polypeptide is Melanocyte-stimulating hormone receptor (MC1R) (Bos taurus (Bovine)).